Reading from the N-terminus, the 151-residue chain is Globin-2 B chain (151 aa).

Serine 1 is modified (N-acetylserine). The Globin domain maps to valine 11–leucine 151. A heme b-binding site is contributed by histidine 103.

Belongs to the globin family. As to quaternary structure, heterotetramer of two alpha chains and two beta chains.

This is Globin-2 B chain from Anadara inaequivalvis (Inequivalve ark).